The primary structure comprises 130 residues: Small ribosomal subunit protein eS17 (130 aa).

It belongs to the eukaryotic ribosomal protein eS17 family.

In Theileria parva (East coast fever infection agent), this protein is Small ribosomal subunit protein eS17 (RPS17).